We begin with the raw amino-acid sequence, 504 residues long: Peptidyl-prolyl cis-trans isomerase-like 4 (504 aa).

Residues Met1–Ile169 form the PPIase cyclophilin-type domain. The RRM domain occupies Asn246–Ser324. Over residues Arg330 to Thr339 the composition is skewed to polar residues. The disordered stretch occupies residues Arg330–Arg504. The span at Gly340–Tyr354 shows a compositional bias: gly residues. Basic and acidic residues-rich tracts occupy residues Gly356–Arg381 and Ser416–Arg504.

The protein belongs to the cyclophilin-type PPIase family. PPIL4 subfamily.

The protein resides in the nucleus. It carries out the reaction [protein]-peptidylproline (omega=180) = [protein]-peptidylproline (omega=0). Its function is as follows. PPIases accelerate the folding of proteins. It catalyzes the cis-trans isomerization of proline imidic peptide bonds in oligopeptides. The sequence is that of Peptidyl-prolyl cis-trans isomerase-like 4 (CYP6) from Cryptococcus neoformans var. neoformans serotype D (strain B-3501A) (Filobasidiella neoformans).